The sequence spans 750 residues: Photosystem I P700 chlorophyll a apoprotein A1 (750 aa).

8 consecutive transmembrane segments (helical) span residues 70-93 (VFSAHFGQLAIILIWLSGMYFHGA), 156-179 (LYCTAIGALIFAGLMLFAGWFHYH), 195-219 (LNHHLAGLLGLGSLGWAGHQVHVSL), 291-309 (TAHHHLAIGVLFLVAGHMY), 346-369 (WHAQLALNLAMLGSLTIIVAHHMY), 385-411 (LSLFTHHMWIGGFLVVGAAAHAAIFMV), 433-455 (AIISHLNWVCIFLGFHSFGLYIH), and 531-549 (FLVHHIHAFTIHVTVLILL). [4Fe-4S] cluster is bound by residues C573 and C582. The next 2 membrane-spanning stretches (helical) occupy residues 589–610 (HVFLGLFWMYNSISIVIFHFSW) and 664–686 (LSAYGLLFLGAHFVWAFSLMFLF). H675 is a binding site for chlorophyll a'. Chlorophyll a contacts are provided by M683 and Y691. W692 is a binding site for phylloquinone. Residues 724–744 (AVGVAHYLLGGIATTWAFFLA) traverse the membrane as a helical segment.

The protein belongs to the PsaA/PsaB family. In terms of assembly, the PsaA/B heterodimer binds the P700 chlorophyll special pair and subsequent electron acceptors. PSI consists of a core antenna complex that captures photons, and an electron transfer chain that converts photonic excitation into a charge separation. The eukaryotic PSI reaction center is composed of at least 11 subunits. Requires P700 is a chlorophyll a/chlorophyll a' dimer, A0 is one or more chlorophyll a, A1 is one or both phylloquinones and FX is a shared 4Fe-4S iron-sulfur center. as cofactor.

The protein localises to the plastid. It is found in the chloroplast thylakoid membrane. The catalysed reaction is reduced [plastocyanin] + hnu + oxidized [2Fe-2S]-[ferredoxin] = oxidized [plastocyanin] + reduced [2Fe-2S]-[ferredoxin]. Its function is as follows. PsaA and PsaB bind P700, the primary electron donor of photosystem I (PSI), as well as the electron acceptors A0, A1 and FX. PSI is a plastocyanin-ferredoxin oxidoreductase, converting photonic excitation into a charge separation, which transfers an electron from the donor P700 chlorophyll pair to the spectroscopically characterized acceptors A0, A1, FX, FA and FB in turn. Oxidized P700 is reduced on the lumenal side of the thylakoid membrane by plastocyanin. This chain is Photosystem I P700 chlorophyll a apoprotein A1, found in Angiopteris evecta (Mule's foot fern).